The chain runs to 878 residues: Protein translocase subunit SecA (878 aa).

Residues Q81, 99-103 (GEGKT), and D489 each bind ATP.

The protein belongs to the SecA family.

It localises to the plastid. The protein localises to the chloroplast stroma. Its subcellular location is the chloroplast thylakoid membrane. It catalyses the reaction ATP + H2O + cellular proteinSide 1 = ADP + phosphate + cellular proteinSide 2.. Functionally, has a central role in coupling the hydrolysis of ATP to the transfer of proteins across the thylakoid membrane. The polypeptide is Protein translocase subunit SecA (Thalassiosira pseudonana (Marine diatom)).